The chain runs to 240 residues: Octanoyltransferase (240 aa).

The BPL/LPL catalytic domain maps to Gly-31–Pro-216. Substrate contacts are provided by residues Arg-76 to His-83, Ala-145 to Gly-147, and Gly-159 to Ala-161. The active-site Acyl-thioester intermediate is Cys-177.

Belongs to the LipB family.

It localises to the cytoplasm. It carries out the reaction octanoyl-[ACP] + L-lysyl-[protein] = N(6)-octanoyl-L-lysyl-[protein] + holo-[ACP] + H(+). It functions in the pathway protein modification; protein lipoylation via endogenous pathway; protein N(6)-(lipoyl)lysine from octanoyl-[acyl-carrier-protein]: step 1/2. In terms of biological role, catalyzes the transfer of endogenously produced octanoic acid from octanoyl-acyl-carrier-protein onto the lipoyl domains of lipoate-dependent enzymes. Lipoyl-ACP can also act as a substrate although octanoyl-ACP is likely to be the physiological substrate. This Roseiflexus sp. (strain RS-1) protein is Octanoyltransferase.